The chain runs to 1034 residues: Potassium-transporting ATPase alpha chain 1 (1034 aa).

Residues 1–97 lie on the Cytoplasmic side of the membrane; it reads MGKAENYEMY…NALRPPRGTP (97 aa). Phosphotyrosine is present on residues Y7 and Y10. The interval 14–41 is disordered; sequence LGPGPGGDMAAKMSKKKAGKGGGKKKEK. Over residues 26–39 the composition is skewed to basic residues; sequence MSKKKAGKGGGKKK. S27 carries the post-translational modification Phosphoserine. The chain crosses the membrane as a helical span at residues 98-118; it reads EYVKFARQLAGGLQCLMWVAA. Residues 119 to 141 are Lumenal-facing; that stretch reads AICLIAFAIQASEGDLTTDDNLY. A helical transmembrane segment spans residues 142–162; it reads LALALIAVVVVTGCFGYYQEF. The Cytoplasmic segment spans residues 163-298; the sequence is KSTNIIASFK…NEKTPIAIEI (136 aa). The segment covering 225 to 239 has biased composition (polar residues); it reads NSSLTGESEPQTRSP. Residues 225–245 are disordered; it reads NSSLTGESEPQTRSPECTHES. Residues 299 to 318 traverse the membrane as a helical segment; the sequence is EHFVDIIAGLAILFGATFFV. Residues 319 to 330 lie on the Lumenal side of the membrane; sequence VAMCIGYTFLRA. The chain crosses the membrane as a helical span at residues 331 to 348; that stretch reads MVFFMAIVVAYVPEGLLA. Positions 339, 340, 342, and 344 each coordinate K(+). Over 349 to 782 the chain is Cytoplasmic; it reads TVTVCLSLTA…EQGRLIFDNL (434 aa). D386 serves as the catalytic 4-aspartylphosphate intermediate. Mg(2+)-binding residues include D386 and T388. Residues S462 and S600 each carry the phosphoserine modification. Mg(2+) contacts are provided by D727 and D731. A helical transmembrane segment spans residues 783–802; sequence KKSIAYTLTKNIPELTPYLI. E796 is a K(+) binding site. The Lumenal portion of the chain corresponds to 803–812; it reads YITVSVPLPL. The helical transmembrane segment at 813-833 threads the bilayer; that stretch reads GCITILFIELCTDIFPSVSLA. E821 is a binding site for K(+). Over 834–853 the chain is Cytoplasmic; sequence YEKAESDIMHLRPRNPKRDR. A Phosphoserine modification is found at S839. The chain crosses the membrane as a helical span at residues 854-876; it reads LVNEPLAAYSYFQIGAIQSFAGF. Residues 877–928 lie on the Lumenal side of the membrane; sequence TDYFTAMAQEGWFPLLCVGLRPYWENHHLQDLQDSYGQEWTFGQRLYQQYTC. The chain crosses the membrane as a helical span at residues 929–948; sequence YTVFFISIEMCQIADVLIRK. Residues 949–962 are Cytoplasmic-facing; it reads TRRLSAFQQGFFRN. At S953 the chain carries Phosphoserine; by PKA. The chain crosses the membrane as a helical span at residues 963 to 981; that stretch reads RILVIAIVFQVCIGCFLCY. Residues 982–996 lie on the Lumenal side of the membrane; that stretch reads CPGMPNIFNFMPIRY. A helical membrane pass occupies residues 997-1017; sequence QWWLVPMPFGLLIFVYDEIRK. Over 1018–1034 the chain is Cytoplasmic; sequence LGVRCCPGSWWDQELYY.

Belongs to the cation transport ATPase (P-type) (TC 3.A.3) family. Type IIC subfamily. The gastric H(+)/K(+) ATPase pump is composed of the catalytic alpha subunit ATP4A and the regulatory beta subunit ATP4B. Interacts (via the P-domain) with ATP4B (via N-terminus); this interaction stabilizes the lumenal-open E2 conformation state and prevents the reverse reaction of the transport cycle.

The protein resides in the apical cell membrane. The enzyme catalyses K(+)(out) + ATP + H2O + H(+)(in) = K(+)(in) + ADP + phosphate + 2 H(+)(out). The catalytic subunit of the gastric H(+)/K(+) ATPase pump which transports H(+) ions in exchange for K(+) ions across the apical membrane of parietal cells. Uses ATP as an energy source to pump H(+) ions to the gastric lumen while transporting K(+) ion from the lumen into the cell. Remarkably generates a million-fold proton gradient across the gastric parietal cell membrane, acidifying the gastric juice down to pH 1. Within a transport cycle, the transfer of a H(+) ion across the membrane is coupled to ATP hydrolysis and is associated with a transient phosphorylation that shifts the pump conformation from inward-facing (E1) to outward-facing state (E2). The release of the H(+) ion in the stomach lumen is followed by binding of K(+) ion converting the pump conformation back to the E1 state. This Canis lupus familiaris (Dog) protein is Potassium-transporting ATPase alpha chain 1 (ATP4A).